We begin with the raw amino-acid sequence, 210 residues long: Natriuretic peptide BM026 (210 aa).

The N-terminal stretch at 1-26 (MVGPSRLAGGGLLLLLLALLPVALDG) is a signal peptide. The natriuretic peptide domain 1 stretch occupies residues 83-99 (CFGHKIDRISHSSGMGC). Cysteines 83 and 99 form a disulfide. Over residues 122–134 (ESKKSRAARDRMV) the composition is skewed to basic and acidic residues. The interval 122–210 (ESKKSRAARD…QFNSKSSQVA (89 aa)) is disordered. Gly residues predominate over residues 140 to 150 (AGGGGGGGGGD). Basic and acidic residues predominate over residues 156–176 (ELAKKDQHNNCFGRRIDRISH). Positions 166–182 (CFGRRIDRISHSTDLGC) are natriuretic peptide domain 2. Cys-166 and Cys-182 form a disulfide bridge. The span at 201-210 (QFNSKSSQVA) shows a compositional bias: polar residues.

It belongs to the natriuretic peptide family. As to expression, expressed by the venom gland.

Its subcellular location is the secreted. Its function is as follows. Natriuretic peptide that dose-dependently induces the rapid relaxation of rat aortic strips phenylephrine-precontracted. Acts by stimulating cGMP production in a dose-dependent manner (by probably activating NPR1 and/or NPR2). May also show potent hypotensive effects. This Bungarus multicinctus (Many-banded krait) protein is Natriuretic peptide BM026.